The following is a 271-amino-acid chain: Ribosomal RNA small subunit methyltransferase A (271 aa).

Residues His11, Leu13, Gly38, Glu59, Asp84, and Asn109 each coordinate S-adenosyl-L-methionine.

The protein belongs to the class I-like SAM-binding methyltransferase superfamily. rRNA adenine N(6)-methyltransferase family. RsmA subfamily.

Its subcellular location is the cytoplasm. The enzyme catalyses adenosine(1518)/adenosine(1519) in 16S rRNA + 4 S-adenosyl-L-methionine = N(6)-dimethyladenosine(1518)/N(6)-dimethyladenosine(1519) in 16S rRNA + 4 S-adenosyl-L-homocysteine + 4 H(+). Its function is as follows. Specifically dimethylates two adjacent adenosines (A1518 and A1519) in the loop of a conserved hairpin near the 3'-end of 16S rRNA in the 30S particle. May play a critical role in biogenesis of 30S subunits. This chain is Ribosomal RNA small subunit methyltransferase A, found in Trichormus variabilis (strain ATCC 29413 / PCC 7937) (Anabaena variabilis).